We begin with the raw amino-acid sequence, 976 residues long: Ephrin type-A receptor 2 (976 aa).

A signal peptide spans Met-1–Ala-23. A mediates interaction with CLDN4 region spans residues Met-1–Gln-206. Residues Gln-25–Val-537 are Extracellular-facing. In terms of domain architecture, Eph LBD spans Glu-28 to Gln-206. Disulfide bonds link Cys-70/Cys-188 and Cys-105/Cys-115. In terms of domain architecture, Fibronectin type-III 1 spans Pro-328–Val-432. Asn-407 and Asn-435 each carry an N-linked (GlcNAc...) asparagine glycan. Positions Glu-438–Pro-529 constitute a Fibronectin type-III 2 domain. Residues Ile-538–Ile-558 traverse the membrane as a helical segment. Residues His-559 to Ile-976 are Cytoplasmic-facing. Ser-570 carries the post-translational modification Phosphoserine. Tyr-575 carries the post-translational modification Phosphotyrosine. Residue Ser-579 is modified to Phosphoserine. Tyr-588 carries the phosphotyrosine; by autocatalysis modification. Tyr-594 carries the phosphotyrosine modification. The tract at residues Thr-606–Phe-906 is mediates interaction with ARHGEF16. The 263-residue stretch at Val-613–Ile-875 folds into the Protein kinase domain. Ile-619–Val-627 serves as a coordination point for ATP. Position 628 is a phosphotyrosine (Tyr-628). Lys-646 is an ATP binding site. Residue Thr-647 is modified to Phosphothreonine. Tyr-735 is subject to Phosphotyrosine; by autocatalysis. The active-site Proton acceptor is the Asp-739. Phosphotyrosine is present on Tyr-772. Phosphoserine is present on residues Ser-869, Ser-892, Ser-897, and Ser-901. Positions Asp-886–Ile-976 are negatively regulates interaction with ARHGEF16. Positions Val-904 to Gln-968 constitute an SAM domain. Tyr-921 carries the phosphotyrosine; by autocatalysis modification. Position 930 is a phosphotyrosine (Tyr-930). The PDZ-binding motif lies at Ile-974–Ile-976.

Belongs to the protein kinase superfamily. Tyr protein kinase family. Ephrin receptor subfamily. Homodimer. Interacts with SLA. Interacts (phosphorylated form) with VAV2, VAV3 and PI3-kinase p85 subunit (PIK3R1, PIK3R2 or PIK3R3); critical for the EFNA1-induced activation of RAC1 which stimulates cell migration. Interacts with INPPL1; regulates activated EPHA2 endocytosis and degradation. Interacts (inactivated form) with PTK2/FAK1 and interacts (EFNA1 ligand-activated form) with PTPN11; regulates integrin-mediated adhesion. Interacts with ARHGEF16, DOCK4 and ELMO2; mediates ligand-independent activation of RAC1 which stimulates cell migration. Interacts with CLDN4; phosphorylates CLDN4 and may regulate tight junctions. Interacts with ACP1. Interacts with ANKS1A. Interacts with CEMIP. Interacts with NCK1; may regulate EPHA2 activity in cell migration and adhesion. Interacts with TIMD4. Autophosphorylates. Phosphorylated on tyrosine upon binding and activation by EFNA1. Phosphorylated residues Tyr-588 and Tyr-594 are required for binding VAV2 and VAV3 while phosphorylated residues Tyr-735 and Tyr-930 are required for binding PI3-kinase p85 subunit (PIK3R1, PIK3R2 or PIK3R3). These phosphorylated residues are critical for recruitment of VAV2 and VAV3 and PI3-kinase p85 subunit which transduce downstream signaling to activate RAC1 GTPase and cell migration. Dephosphorylation of Tyr-930 by PTPRF prevents the interaction of EPHA2 with NCK1. Phosphorylated at Ser-897 by PKB; serum-induced phosphorylation which targets EPHA2 to the cell leading edge and stimulates cell migration. Phosphorylation by PKB is inhibited by EFNA1-activated EPHA2 which regulates PKB activity via a reciprocal regulatory loop. Phosphorylated at Ser-897 in response to TNF by RPS6KA1 and RPS6KA3; RPS6KA-EPHA2 signaling pathway controls cell migration. Phosphorylated at Ser-897 by PKA; blocks cell retraction induced by EPHA2 kinase activity. Dephosphorylated by ACP1. Post-translationally, ubiquitinated by CHIP/STUB1. Ubiquitination is regulated by the HSP90 chaperone and regulates the receptor stability and activity through proteasomal degradation. ANKS1A prevents ubiquitination and degradation.

Its subcellular location is the cell membrane. It is found in the cell projection. The protein resides in the ruffle membrane. It localises to the lamellipodium membrane. The protein localises to the cell junction. Its subcellular location is the focal adhesion. It carries out the reaction L-tyrosyl-[protein] + ATP = O-phospho-L-tyrosyl-[protein] + ADP + H(+). Its function is as follows. Receptor tyrosine kinase which binds promiscuously membrane-bound ephrin-A family ligands residing on adjacent cells, leading to contact-dependent bidirectional signaling into neighboring cells. The signaling pathway downstream of the receptor is referred to as forward signaling while the signaling pathway downstream of the ephrin ligand is referred to as reverse signaling. Activated by the ligand ephrin-A1/EFNA1 regulates migration, integrin-mediated adhesion, proliferation and differentiation of cells. Regulates cell adhesion and differentiation through DSG1/desmoglein-1 and inhibition of the ERK1/ERK2 signaling pathway. May also participate in UV radiation-induced apoptosis and have a ligand-independent stimulatory effect on chemotactic cell migration. During development, may function in distinctive aspects of pattern formation and subsequently in development of several fetal tissues. Involved for instance in angiogenesis, in early hindbrain development and epithelial proliferation and branching morphogenesis during mammary gland development. Engaged by the ligand ephrin-A5/EFNA5 may regulate lens fiber cells shape and interactions and be important for lens transparency development and maintenance. With ephrin-A2/EFNA2 may play a role in bone remodeling through regulation of osteoclastogenesis and osteoblastogenesis. The sequence is that of Ephrin type-A receptor 2 (EPHA2) from Macaca fascicularis (Crab-eating macaque).